The primary structure comprises 785 residues: LPS-assembly protein LptD (785 aa).

Residues 1-58 (MSCSCLCMSLYRGADRIGRFYTAHCPQDMALCMHRQKLNPLALALAAAFALNAPAALA) form the signal peptide.

It belongs to the LptD family. As to quaternary structure, component of the lipopolysaccharide transport and assembly complex. Interacts with LptE and LptA.

It is found in the cell outer membrane. Its function is as follows. Together with LptE, is involved in the assembly of lipopolysaccharide (LPS) at the surface of the outer membrane. The chain is LPS-assembly protein LptD from Chromobacterium violaceum (strain ATCC 12472 / DSM 30191 / JCM 1249 / CCUG 213 / NBRC 12614 / NCIMB 9131 / NCTC 9757 / MK).